A 281-amino-acid chain; its full sequence is Probable short-chain type dehydrogenase/reductase blr2146 (281 aa).

V10–V34 is an NAD(+) binding site. S146 serves as a coordination point for substrate. Catalysis depends on Y159, which acts as the Proton acceptor. Residues G261 to C281 form a disordered region.

Belongs to the short-chain dehydrogenases/reductases (SDR) family.

This chain is Probable short-chain type dehydrogenase/reductase blr2146, found in Bradyrhizobium diazoefficiens (strain JCM 10833 / BCRC 13528 / IAM 13628 / NBRC 14792 / USDA 110).